Consider the following 147-residue polypeptide: Large ribosomal subunit protein uL13 (147 aa).

Belongs to the universal ribosomal protein uL13 family. Part of the 50S ribosomal subunit.

In terms of biological role, this protein is one of the early assembly proteins of the 50S ribosomal subunit, although it is not seen to bind rRNA by itself. It is important during the early stages of 50S assembly. The polypeptide is Large ribosomal subunit protein uL13 (Mycobacteroides abscessus (strain ATCC 19977 / DSM 44196 / CCUG 20993 / CIP 104536 / JCM 13569 / NCTC 13031 / TMC 1543 / L948) (Mycobacterium abscessus)).